The sequence spans 63 residues: Beta-defensin 4 (63 aa).

An N-terminal signal peptide occupies residues 1-22 (MRLHHLLLAVLFLVLSAGSGFT). A Pyrrolidone carboxylic acid modification is found at Gln-23. Cystine bridges form between Cys-31/Cys-60, Cys-38/Cys-53, and Cys-43/Cys-61.

The protein belongs to the beta-defensin family. As to expression, neutrophilic granules.

It localises to the secreted. Functionally, has bactericidal activity. Active against E.coli ML35 and S.aureus 502A. The sequence is that of Beta-defensin 4 (DEFB4) from Bos taurus (Bovine).